We begin with the raw amino-acid sequence, 1022 residues long: Sodium/potassium-transporting ATPase subunit alpha-1 (1022 aa).

Residues 1 to 5 constitute a propeptide that is removed on maturation; it reads MGRGT. Residues 1–10 are compositionally biased toward basic and acidic residues; that stretch reads MGRGTGHDQY. The segment at 1–34 is disordered; sequence MGRGTGHDQYELAATSEGGRKKKRDKKKKDMDDL. Over 6–86 the chain is Cytoplasmic; sequence GHDQYELAAT…NALTPPPTTP (81 aa). Serine 16 carries the post-translational modification Phosphoserine; by PKC. The segment at 81 to 83 is interaction with phosphoinositide-3 kinase; sequence PPP. The chain crosses the membrane as a helical span at residues 87-107; it reads EWVKFCRQLFGGFSMLLWIGA. Topologically, residues 108–130 are extracellular; that stretch reads ILCFLAYGIQAASEDEPANDNLY. The chain crosses the membrane as a helical span at residues 131 to 151; it reads LGVVLSAVVIITGCFSYYQEA. Residues 152-287 are Cytoplasmic-facing; the sequence is KSSRIMDSFK…VGRTPISIEI (136 aa). Positions 213–234 are disordered; that stretch reads DNSSLTGESEPQTRSPDFSNEN. A helical transmembrane segment spans residues 288 to 307; that stretch reads EHFIHIITGVAVFLGVSFFI. Topologically, residues 308–319 are extracellular; it reads LSLILGYAWLEA. A helical membrane pass occupies residues 320-337; the sequence is VIFLIGIIVANVPEGLLA. At 338–771 the chain is on the cytoplasmic side; the sequence is TVTVCLTLTA…EEGRLIFDNL (434 aa). Aspartate 375 (4-aspartylphosphate intermediate) is an active-site residue. Residue lysine 486 participates in ATP binding. Mg(2+)-binding residues include aspartate 716 and aspartate 720. A helical membrane pass occupies residues 772–791; sequence KKSIAYTLTSNIPEITPFLL. The Extracellular portion of the chain corresponds to 792-801; the sequence is FIIANIPLPL. Residues 802–822 form a helical membrane-spanning segment; that stretch reads GTVTILCIDLGTDMVPAISLA. At 823 to 842 the chain is on the cytoplasmic side; that stretch reads YEAAESDIMKRQPRNPRTDK. The chain crosses the membrane as a helical span at residues 843 to 865; the sequence is LVNERLISIAYGQIGMMQATAGF. Residues 866–917 are Extracellular-facing; the sequence is FTYFVILAENGFLPSTLLGIRVKWDDKYVNDLEDSYGQQWTYEQRKIVEYTC. The helical transmembrane segment at 918 to 937 threads the bilayer; sequence HTSFFASIVIVQWADLIICK. The Cytoplasmic portion of the chain corresponds to 938 to 950; sequence TRRNSIIQQGMKN. At serine 942 the chain carries Phosphoserine; by PKA. A helical membrane pass occupies residues 951–969; it reads KILIFGLFEETALAAFLSY. The Extracellular portion of the chain corresponds to 970-984; it reads CPGMDVALRMYPLKP. A helical membrane pass occupies residues 985-1005; that stretch reads SWWFCAFPYSLLIFLYDEARR. Topologically, residues 1006-1022 are cytoplasmic; the sequence is FILRRNPDGWVERETYY.

It belongs to the cation transport ATPase (P-type) (TC 3.A.3) family. Type IIC subfamily. In terms of assembly, the sodium/potassium-transporting ATPase is composed of a catalytic alpha subunit, an auxiliary non-catalytic beta subunit and an additional regulatory subunit.

It is found in the cell membrane. The protein resides in the sarcolemma. It carries out the reaction K(+)(out) + Na(+)(in) + ATP + H2O = K(+)(in) + Na(+)(out) + ADP + phosphate + H(+). In terms of biological role, this is the catalytic component of the active enzyme, which catalyzes the hydrolysis of ATP coupled with the exchange of sodium and potassium ions across the plasma membrane. This action creates the electrochemical gradient of sodium and potassium ions, providing the energy for active transport of various nutrients. The sequence is that of Sodium/potassium-transporting ATPase subunit alpha-1 (atp1a1) from Anguilla anguilla (European freshwater eel).